We begin with the raw amino-acid sequence, 617 residues long: COMPASS component cclA (617 aa).

2 stretches are compositionally biased toward low complexity: residues 1 to 19 (MASI…INSP) and 40 to 50 (SSPAPASNASA). Residues 1-89 (MASIQPAGSS…AKKRATAVQN (89 aa)) form a disordered region. Residues 57-69 (SKRNKRDSRKKRE) show a composition bias toward basic residues. The region spanning 157–380 (IADTSFPHIK…YAFNLKETPT (224 aa)) is the B30.2/SPRY domain. The interval 595–617 (TPNTEEPAARPENITVGHDVEMS) is disordered.

It belongs to the cclA family. Component of the COMPASS complex.

It is found in the nucleus. It localises to the chromosome. The protein resides in the telomere. Functionally, component of the COMPASS (Set1C) complex that specifically mono-, di- and trimethylates histone H3 to form H3K4me1/2/3, which subsequently plays a role in telomere length maintenance and transcription elongation regulation. Controls the production of several secondary metabolites, including astellolides. The polypeptide is COMPASS component cclA (Aspergillus oryzae (strain ATCC 42149 / RIB 40) (Yellow koji mold)).